The sequence spans 106 residues: DNA-directed RNA polymerase subunit omega (106 aa).

Positions Arg-76–Ala-106 are disordered. The span at Glu-92–Ala-106 shows a compositional bias: basic and acidic residues.

The protein belongs to the RNA polymerase subunit omega family. In terms of assembly, the RNAP catalytic core consists of 2 alpha, 1 beta, 1 beta' and 1 omega subunit. When a sigma factor is associated with the core the holoenzyme is formed, which can initiate transcription.

The enzyme catalyses RNA(n) + a ribonucleoside 5'-triphosphate = RNA(n+1) + diphosphate. Functionally, promotes RNA polymerase assembly. Latches the N- and C-terminal regions of the beta' subunit thereby facilitating its interaction with the beta and alpha subunits. This chain is DNA-directed RNA polymerase subunit omega, found in Rubrobacter xylanophilus (strain DSM 9941 / JCM 11954 / NBRC 16129 / PRD-1).